The chain runs to 673 residues: Probable potassium transport system protein Kup 1 (673 aa).

Helical transmembrane passes span 14 to 34 (GAGF…SPLY), 58 to 78 (LSLI…WIAL), 101 to 121 (WLII…ALTP), 147 to 167 (LPIV…QRFG), 175 to 195 (FGPV…INLF), 196 to 216 (GDFS…LLSP), 220 to 240 (AGIF…ALYS), 252 to 272 (VSWP…AAWL), 294 to 314 (LIIF…QALI), 345 to 365 (LYIP…VVYF), 374 to 394 (AYGL…TVYL), 403 to 423 (VFVV…FAAS), and 427 to 447 (FLHG…VMAI).

This sequence belongs to the HAK/KUP transporter (TC 2.A.72) family.

The protein localises to the cell membrane. It carries out the reaction K(+)(in) + H(+)(in) = K(+)(out) + H(+)(out). Transport of potassium into the cell. Likely operates as a K(+):H(+) symporter. The sequence is that of Probable potassium transport system protein Kup 1 from Lactococcus lactis subsp. cremoris (strain SK11).